Consider the following 427-residue polypeptide: Lupus La protein homolog B (427 aa).

In terms of domain architecture, HTH La-type RNA-binding spans 6 to 98 (DKEQLDLDTK…RRSPAKPLPE (93 aa)). Positions 110–202 (RSVYIKGFPT…EERKLNKSEE (93 aa)) constitute an RRM domain. 2 disordered regions span residues 193 to 220 (EERK…AEDA) and 319 to 427 (EGKQ…VGDQ). The xRRM domain maps to 226 to 348 (EERVGCLLKF…KGRGGKGNDS (123 aa)). The short motif at 315 to 331 (KKIMEGKQESFNKRKGR) is the Nuclear localization signal element. Composition is skewed to basic residues over residues 327–342 (KRKG…KGRG) and 351–360 (RKKIQFQGKK). A compositionally biased stretch (acidic residues) spans 365-376 (SSDDEDDMEESE). Basic and acidic residues predominate over residues 405-427 (RALDDKAEDGPAVKQSKTEVGDQ).

In terms of processing, phosphorylated.

It is found in the nucleus. In terms of biological role, la protein plays a role in the transcription of RNA polymerase III. It is most probably a transcription termination factor. Binds to the 3' termini of virtually all nascent polymerase III transcripts. This Xenopus laevis (African clawed frog) protein is Lupus La protein homolog B (ssb-b).